Consider the following 248-residue polypeptide: Acetoacetyl-CoA reductase (248 aa).

Residues 14-16, R42, and 90-94 contribute to the NADP(+) site; these read GGI and NAGIT. Substrate-binding positions include D96 and 149–152; that span reads QFGQ. Y155 acts as the Proton acceptor in catalysis. 185 to 188 serves as a coordination point for NADP(+); that stretch reads PGYT. Substrate contacts are provided by residues 186 to 187 and R197; that span reads GY.

Belongs to the short-chain dehydrogenases/reductases (SDR) family.

Its subcellular location is the cytoplasm. The catalysed reaction is a (3R)-3-hydroxyacyl-CoA + NADP(+) = a 3-oxoacyl-CoA + NADPH + H(+). It functions in the pathway biopolymer metabolism; poly-(R)-3-hydroxybutanoate biosynthesis. In Acinetobacter sp. (strain RA3849), this protein is Acetoacetyl-CoA reductase (phaB).